The chain runs to 1070 residues: DNA-directed RNA polymerase subunit beta (1070 aa).

It belongs to the RNA polymerase beta chain family. As to quaternary structure, in plastids the minimal PEP RNA polymerase catalytic core is composed of four subunits: alpha, beta, beta', and beta''. When a (nuclear-encoded) sigma factor is associated with the core the holoenzyme is formed, which can initiate transcription.

It is found in the plastid. The protein resides in the chloroplast. The enzyme catalyses RNA(n) + a ribonucleoside 5'-triphosphate = RNA(n+1) + diphosphate. Functionally, DNA-dependent RNA polymerase catalyzes the transcription of DNA into RNA using the four ribonucleoside triphosphates as substrates. The polypeptide is DNA-directed RNA polymerase subunit beta (Silene latifolia (White campion)).